Here is a 518-residue protein sequence, read N- to C-terminus: Glutamate--cysteine ligase (518 aa).

This sequence belongs to the glutamate--cysteine ligase type 1 family. Type 1 subfamily.

It catalyses the reaction L-cysteine + L-glutamate + ATP = gamma-L-glutamyl-L-cysteine + ADP + phosphate + H(+). It participates in sulfur metabolism; glutathione biosynthesis; glutathione from L-cysteine and L-glutamate: step 1/2. In Escherichia fergusonii (strain ATCC 35469 / DSM 13698 / CCUG 18766 / IAM 14443 / JCM 21226 / LMG 7866 / NBRC 102419 / NCTC 12128 / CDC 0568-73), this protein is Glutamate--cysteine ligase.